We begin with the raw amino-acid sequence, 225 residues long: Putative 5'-nucleotidase alr3139 (225 aa).

A divalent metal cation is bound by residues D8, D9, S37, and N88.

This sequence belongs to the SurE nucleotidase family. A divalent metal cation serves as cofactor.

It is found in the cytoplasm. The catalysed reaction is a ribonucleoside 5'-phosphate + H2O = a ribonucleoside + phosphate. In terms of biological role, nucleotidase that shows phosphatase activity on nucleoside 5'-monophosphates. This Synechocystis sp. (strain ATCC 27184 / PCC 6803 / Kazusa) protein is Putative 5'-nucleotidase alr3139.